Reading from the N-terminus, the 303-residue chain is Pseudouridine-5'-phosphate glycosidase (303 aa).

Catalysis depends on Glu26, which acts as the Proton donor. Substrate contacts are provided by Lys87 and Val107. Asp139 contributes to the Mn(2+) binding site. A substrate-binding site is contributed by 141–143; sequence SAD. Lys160 acts as the Nucleophile in catalysis.

The protein belongs to the pseudouridine-5'-phosphate glycosidase family. Homotrimer. Requires Mn(2+) as cofactor.

The catalysed reaction is D-ribose 5-phosphate + uracil = psi-UMP + H2O. Functionally, catalyzes the reversible cleavage of pseudouridine 5'-phosphate (PsiMP) to ribose 5-phosphate and uracil. Functions biologically in the cleavage direction, as part of a pseudouridine degradation pathway. The polypeptide is Pseudouridine-5'-phosphate glycosidase (Saccharopolyspora erythraea (strain ATCC 11635 / DSM 40517 / JCM 4748 / NBRC 13426 / NCIMB 8594 / NRRL 2338)).